We begin with the raw amino-acid sequence, 867 residues long: MQAEAADWFSSMPFQKHVYYPLASGPEGPDVAVAAAAAGAASMACAPPSAASGPLPFFQFRPRLESVDWRRLSAIDVDKVAGAVDVLTLQENIMNITFCKLEDEKCPHCQSGVDPVLLKLIRLAQFTIEYLLHSQEFLTSQLHTLEERLRLSHCDGEQSKKLLTKQAGEIKTLKEECKRRKKMISTQQLMIEAKANYYQCHFCDKAFMNQAFLQSHIQRRHTEENSHFEYQKNAQIEKLRSEIVVLKEELQLTRSELEAAHHASAVRFSKEYEMQKTKEEDFLKLFDRWKEEEKEKLVDEMEKVKEMFMKEFKELTSKNSALEYQLSEIQKSNMQIKSNIGTLKDAHEFKEDRSPYPQDFHNVMQLLDSQESKWTARVQAIHQEHKKEKGRLLSHIEKLRTSMIDDLNASNVFYKKRIEELGQRLQEQNELIITQRQQIKDFTCNPLNSISEPKGNPLAWQAFESQPAAPAVPMNAPALHTLETKSSLPMVHEQAFSSHILEPIEELSEEEKGRENEQKLNNNKMHLRKALKSNSSLTKGLRTMVEQNLMEKLETLGINADIRGISSDQLHRVLKSVESERHKQEREIPNFHQIREFLEHQVSCKIEEKALLSSDQCSVSQMDTLSTGEVPKMIQLPSKNRQLIRQKAVSTDRTSVPKIKKNVMEDPFPRKSSTITTPPFSSEEEQEDDDLIRAYASPGPLPVPPPQNKGSFGKNTVKSDADGTEGSEIEDTDDSPKPAGVAVKTPTEKVEKMFPHRKNVNKPVGGTNVPEMFIKKEELQELKCADVEDEDWDISSLEEEISLGKKSGKEQKEPPPAKNEPHFAHVLNAWGAFNPKGPKGEGLQENESSTLKSSLVTVTDWSDTSDV.

Residues 12–203 (MPFQKHVYYP…KANYYQCHFC (192 aa)) are mediates interaction with PCM1. Residues 12–367 (MPFQKHVYYP…QDFHNVMQLL (356 aa)) are mediates interaction with GLI3 and localization to the cilium basal body. Residues 154–278 (CDGEQSKKLL…SKEYEMQKTK (125 aa)) are required for interaction with DAZ1. Residues 198–221 (YQCHFCDKAFMNQAFLQSHIQRRH) form a C2H2-type zinc finger. Serine 226 carries the phosphoserine; by PLK1 modification. 3 coiled-coil regions span residues 230 to 340 (YQKN…KSNI), 401 to 445 (TSMI…FTCN), and 568 to 588 (DQLHRVLKSVESERHKQEREI). The interval 446-617 (PLNSISEPKG…EKALLSSDQC (172 aa)) is mediates interaction with GDI2 and RAB8A. Composition is skewed to polar residues over residues 643 to 654 (LIRQKAVSTDRT), 671 to 680 (KSSTITTPPF), and 708 to 718 (NKGSFGKNTVK). Disordered stretches follow at residues 643–768 (LIRQ…GGTN) and 796–867 (SLEE…TSDV). Residues 722-733 (DGTEGSEIEDTD) show a composition bias toward acidic residues. Over residues 807-823 (SGKEQKEPPPAKNEPHF) the composition is skewed to basic and acidic residues. A compositionally biased stretch (low complexity) spans 848–859 (SSTLKSSLVTVT).

It belongs to the DZIP C2H2-type zinc-finger protein family. In terms of assembly, interacts with DAZ1. Interacts with the BBSome; recruits the BBSome to centriolar satellites of the cilium. Interacts with PCM1; localizes DZIP1 and the associated BBSome to centriolar satellites. Interacts with RAB8A (GDP-bound inactive form); recruits RAB8A to the basal body of the cilium and prevents its inhibition by GDI2. Interacts with GDI2; negatively regulates the interaction of GDI2 with GDP-bound RAB8A. Interacts with GLI3; retains GLI3 within the cytoplasm. Interacts with CEP164. Interacts with IFT88. In terms of processing, phosphorylation at Ser-226 by PLK1 before mitosis prevents interaction with PCM1 and localization to centriolar satellites. Thereby, it negatively regulates the localization of the BBSome to centriolar satellites. In terms of tissue distribution, predominantly expressed in testis (at protein level). Also expressed in fetal brain, adult oocytes and ovary. Expressed in undifferentiated ES cells. In testis, it is specifically expressed in germ cells (at protein level). Expressed in mature germ cells and secondary spermatocytes, while it is weakly or not expressed in primary spermatocytes.

Its subcellular location is the cytoplasm. It is found in the cytoskeleton. The protein resides in the cilium basal body. It localises to the microtubule organizing center. The protein localises to the centrosome. Its subcellular location is the centriolar satellite. It is found in the centriole. The protein resides in the nucleus. It localises to the nucleus speckle. Its function is as follows. Molecular adapter that recruits protein complexes required for cilium assembly and function to the cilium basal body. At the exit of mitosis, localizes to the basal body and ciliary base of the forming primary cilium where it recruits and activates RAB8A to direct vesicle-mediated transport of proteins to the cilium. Also recruits the BBSome, a complex involved in cilium biogenesis, by bridging it to PCM1 at the centriolar satellites of the cilium. It is also required for the recruitment to the cilium basal body of the intraflagellar transport (IFT) machinery as well as the ciliary appendage proteins CEP164 and NINEIN. Functions as a regulator of Hedgehog signaling both through its role in cilium assembly but also probably through its ability to retain GLI3 within the cytoplasm. It is involved in spermatogenesis through its role in organization of the basal body and assembly of the sperm flagellum. Also indirectly involved in heart development through its function in ciliogenesis. The chain is Cilium assembly protein DZIP1 from Homo sapiens (Human).